Consider the following 194-residue polypeptide: Histone H1.0 (194 aa).

Met-1 carries the N-acetylmethionine modification. Positions 1 to 11 (MTENSTSTPAA) are enriched in low complexity. Positions 1-29 (MTENSTSTPAAKPKRAKASKKSTDHPKYS) are disordered. The residue at position 2 (Thr-2) is an N-acetylthreonine; in Histone H1.0, N-terminally processed. Positions 24–97 (DHPKYSDMIV…GASGSFRLAK (74 aa)) constitute an H15 domain. A Citrulline modification is found at Arg-42. Residues 83 to 194 (QTKGVGASGS…SSAKRTGKKK (112 aa)) are disordered. Ser-104 carries the ADP-ribosylserine modification. Basic residues predominate over residues 105 to 194 (VAFKKTKKEV…SSAKRTGKKK (90 aa)).

Belongs to the histone H1/H5 family. ADP-ribosylated on Ser-104 in response to DNA damage.

The protein localises to the nucleus. The protein resides in the chromosome. Functionally, histones H1 are necessary for the condensation of nucleosome chains into higher-order structures. The histones H1.0 are found in cells that are in terminal stages of differentiation or that have low rates of cell division. The chain is Histone H1.0 (H1-0) from Bos taurus (Bovine).